A 625-amino-acid chain; its full sequence is Sorting nexin-41 (625 aa).

The segment at 1–90 (MDYNIFEAVH…STSSHAVVEA (90 aa)) is disordered. Residues 54 to 86 (SPPSSSSLPSSPAHSSSAGSSRASTSSSTSSHA) show a composition bias toward low complexity. A PX domain is found at 98 to 235 (VSLSMSTTAT…QKFLNPEFNW (138 aa)). The a 1,2-diacyl-sn-glycero-3-phospho-(1D-myo-inositol-3-phosphate) site is built by R153, S155, K179, and R202. Coiled coils occupy residues 437-469 (QFKILERLIIEKETKLSSLTEIENQLQKINESL) and 539-563 (QLTEQERSKQIKQLNQDLSKLKDCL).

The protein belongs to the sorting nexin family. Binds to SNX4.

The protein localises to the prevacuolar compartment. It is found in the endosome. It localises to the endosome membrane. In terms of biological role, involved in proper sorting of the v-SNARE protein SNC1. This chain is Sorting nexin-41 (SNX41), found in Saccharomyces cerevisiae (strain ATCC 204508 / S288c) (Baker's yeast).